Here is a 736-residue protein sequence, read N- to C-terminus: Dynamin-1-like protein (736 aa).

An N-acetylmethionine modification is found at M1. The Dynamin-type G domain maps to I22–P302. Positions G32–S39 are G1 motif. A GTP-binding site is contributed by G32–S40. Residues V58–R60 are G2 motif. The interval D146–G149 is G3 motif. The tract at residues T215–D218 is G4 motif. Residues T215–D221 and N246–Q249 contribute to the GTP site. Residues V245 to S248 are G5 motif. Residues Y344–I489 form a middle domain region. Positions N448–E685 are interaction with GSK3B. Residues A502–N569 form a b domain region. Residues R522 to E554 form a disordered region. S529 is modified (phosphoserine). Glycyl lysine isopeptide (Lys-Gly) (interchain with G-Cter in SUMO) cross-links involve residues K532, K535, K558, and K568. Positions P542 to W736 are C-terminal dimerization domain. A disordered region spans residues E566–N588. 2 O-linked (GlcNAc) threonine glycosylation sites follow: T585 and T586. A Glycyl lysine isopeptide (Lys-Gly) (interchain with G-Cter in SUMO) cross-link involves residue K594. K597 carries the N6-acetyllysine; alternate modification. K597 is covalently cross-linked (Glycyl lysine isopeptide (Lys-Gly) (interchain with G-Cter in SUMO); alternate). K606 participates in a covalent cross-link: Glycyl lysine isopeptide (Lys-Gly) (interchain with G-Cter in SUMO). S607 is subject to Phosphoserine. A Glycyl lysine isopeptide (Lys-Gly) (interchain with G-Cter in SUMO) cross-link involves residue K608. At S616 the chain carries Phosphoserine; by PINK1. At S637 the chain carries Phosphoserine; by CAMK1 and PKA. C644 bears the S-nitrosocysteine mark. One can recognise a GED domain in the interval C644–L735. An important for homodimerization region spans residues Y654–K668.

It belongs to the TRAFAC class dynamin-like GTPase superfamily. Dynamin/Fzo/YdjA family. Homotetramer; dimerizes through the N-terminal GTP-middle region of one molecule binding to the GED domain of another DNM1L molecule. Oligomerizes in a GTP-dependent manner to form membrane-associated tubules with a spiral pattern. Interacts with GSK3B and MARCHF5. Interacts (via the GTPase and B domains) with UBE2I; the interaction promotes sumoylation of DNM1L, mainly in its B domain. Interacts with PPP3CA; the interaction dephosphorylates DNM1L and regulates its transition to mitochondria. Interacts with BCL2L1 isoform BCL-X(L) and CLTA; DNM1L and BCL2L1 isoform BCL-X(L) may form a complex in synaptic vesicles that also contains clathrin and MFF. Interacts with MFF; the interaction is inhibited by C11orf65/MFI. Interacts with FIS1. Interacts with MIEF2 and MIEF1; GTP-dependent, regulates GTP hydrolysis and DNM1L oligomerization. Interacts with PGAM5; this interaction leads to dephosphorylation at Ser-656 and activation of GTPase activity and eventually to mitochondria fragmentation. Interacts with RALBP1; during mitosis, recruits DNM1L to the mitochondrion and mediates its activation by the mitotic kinase cyclin B-CDK1. Interacts with FUNDC1; this interaction recruits DNM1L/DRP1 at ER-mitochondria contact sites. In terms of processing, phosphorylation/dephosphorylation events on two sites near the GED domain regulate mitochondrial fission. Phosphorylation on Ser-637 inhibits mitochondrial fission probably through preventing intramolecular interaction. Dephosphorylated on this site by PPP3CA which promotes mitochondrial fission. Phosphorylation on Ser-616 by Pink1 activates the GTPase activity and promotes mitochondrial fission. Phosphorylated in a circadian manner at Ser-637. Dephosphorylated by PGAM5. Post-translationally, sumoylated on various lysine residues within the B domain, probably by MUL1. Sumoylation positively regulates mitochondrial fission. Desumoylated by SENP5 during G2/M transition of mitosis. Appears to be linked to its catalytic activity. S-nitrosylation increases DNM1L dimerization, mitochondrial fission and causes neuronal damage. In terms of processing, O-GlcNAcylation augments the level of the GTP-bound active form of DNM1L and induces translocation from the cytoplasm to mitochondria in cardiomyocytes. It also decreases phosphorylation at Ser-637. Post-translationally, ubiquitination by MARCHF5 affects mitochondrial morphology. In terms of tissue distribution, expressed in the cerebellum and in several regions of the cerebrum and diencephalon. Strongly expressed in the cerebellar Purkinje cells and in the pontile giant neurons. As to expression, widely expressed. Brain-specific. In terms of tissue distribution, brain-specific (at protein level). Expressed in most of the subregions of the brain, including the cerebellum, midbrain, hippocampus, striatum, cerebral cortex, and brain stem. Weakly expressed in the olfactory bulb.

It is found in the cytoplasm. The protein resides in the cytosol. The protein localises to the golgi apparatus. Its subcellular location is the endomembrane system. It localises to the mitochondrion outer membrane. It is found in the peroxisome. The protein resides in the membrane. The protein localises to the clathrin-coated pit. Its subcellular location is the cytoplasmic vesicle. It localises to the secretory vesicle. It is found in the synaptic vesicle membrane. The protein resides in the lysosome. The protein localises to the late endosome. Its subcellular location is the cell membrane. It localises to the postsynaptic density. The catalysed reaction is GTP + H2O = GDP + phosphate + H(+). In terms of biological role, functions in mitochondrial and peroxisomal division. Mediates membrane fission through oligomerization into membrane-associated tubular structures that wrap around the scission site to constrict and sever the mitochondrial membrane through a GTP hydrolysis-dependent mechanism. The specific recruitment at scission sites is mediated by membrane receptors like MFF, MIEF1 and MIEF2 for mitochondrial membranes. While the recruitment by the membrane receptors is GTP-dependent, the following hydrolysis of GTP induces the dissociation from the receptors and allows DNM1L filaments to curl into closed rings that are probably sufficient to sever a double membrane. Acts downstream of PINK1 to promote mitochondrial fission in a PRKN-dependent manner. Plays an important role in mitochondrial fission during mitosis. Required for formation of endocytic vesicles. Through its function in mitochondrial division, ensures the survival of at least some types of postmitotic neurons, including Purkinje cells, by suppressing oxidative damage. Required for normal brain development, including that of cerebellum. Facilitates developmentally regulated apoptosis during neural tube formation. Required for a normal rate of cytochrome c release and caspase activation during apoptosis; this requirement may depend upon the cell type and the physiological apoptotic cues. Proposed to regulate synaptic vesicle membrane dynamics through association with BCL2L1 isoform Bcl-X(L) which stimulates its GTPase activity in synaptic vesicles; the function may require its recruitment by MFF to clathrin-containing vesicles. Required for programmed necrosis execution. Rhythmic control of its activity following phosphorylation at Ser-637 is essential for the circadian control of mitochondrial ATP production. Regulates postsynaptic clathrin-mediated endocytosis by positioning the endocytic zone at the postsynaptic density, independently of mitochondrial division. The chain is Dynamin-1-like protein from Mus musculus (Mouse).